Reading from the N-terminus, the 395-residue chain is Chorismate synthase (395 aa).

The NADP(+) site is built by Arg-40 and Arg-46. FMN contacts are provided by residues 134-136 (RAS), 256-257 (QA), Gly-301, 316-320 (KPIST), and Arg-342.

This sequence belongs to the chorismate synthase family. As to quaternary structure, homotetramer. The cofactor is FMNH2.

The catalysed reaction is 5-O-(1-carboxyvinyl)-3-phosphoshikimate = chorismate + phosphate. It participates in metabolic intermediate biosynthesis; chorismate biosynthesis; chorismate from D-erythrose 4-phosphate and phosphoenolpyruvate: step 7/7. Its function is as follows. Catalyzes the anti-1,4-elimination of the C-3 phosphate and the C-6 proR hydrogen from 5-enolpyruvylshikimate-3-phosphate (EPSP) to yield chorismate, which is the branch point compound that serves as the starting substrate for the three terminal pathways of aromatic amino acid biosynthesis. This reaction introduces a second double bond into the aromatic ring system. The protein is Chorismate synthase of Beutenbergia cavernae (strain ATCC BAA-8 / DSM 12333 / CCUG 43141 / JCM 11478 / NBRC 16432 / NCIMB 13614 / HKI 0122).